A 95-amino-acid polypeptide reads, in one-letter code: UPF0358 protein GK1077 (95 aa).

Belongs to the UPF0358 family.

The chain is UPF0358 protein GK1077 from Geobacillus kaustophilus (strain HTA426).